The primary structure comprises 422 residues: Serine--tRNA ligase (422 aa).

L-serine is bound at residue 230–232; that stretch reads TAE. 261-263 contacts ATP; that stretch reads RAE. Glu-284 is a binding site for L-serine. 348–351 lines the ATP pocket; it reads EISS. Ser-383 serves as a coordination point for L-serine.

The protein belongs to the class-II aminoacyl-tRNA synthetase family. Type-1 seryl-tRNA synthetase subfamily. Homodimer. The tRNA molecule binds across the dimer.

It is found in the cytoplasm. It carries out the reaction tRNA(Ser) + L-serine + ATP = L-seryl-tRNA(Ser) + AMP + diphosphate + H(+). It catalyses the reaction tRNA(Sec) + L-serine + ATP = L-seryl-tRNA(Sec) + AMP + diphosphate + H(+). It functions in the pathway aminoacyl-tRNA biosynthesis; selenocysteinyl-tRNA(Sec) biosynthesis; L-seryl-tRNA(Sec) from L-serine and tRNA(Sec): step 1/1. Its function is as follows. Catalyzes the attachment of serine to tRNA(Ser). Is also able to aminoacylate tRNA(Sec) with serine, to form the misacylated tRNA L-seryl-tRNA(Sec), which will be further converted into selenocysteinyl-tRNA(Sec). In Pelotomaculum thermopropionicum (strain DSM 13744 / JCM 10971 / SI), this protein is Serine--tRNA ligase.